A 467-amino-acid chain; its full sequence is MQESLKKMWSGRFSGESSELLEEFNASIGFDKNLYREDIAGSKAHAKMLGACGILKPEEAAAIVAGLDAVLAQIEEGKFEFKTADEDIHMAVEKRLSELIGSELGGRLHTARSRNDQVALDFRLYVLRQNEQIARQIREFIATLTSLASAHLDTLMPGYTHLQHAQPVSLAYHLLAYAFMFKRDFERFISSHERNNLCPLGSAALAGTPHPIRRELVAQELNFAGITQNAMDSVSDRDFALEILFNISVLMTHASRLCEELILWSSQEFGFVTISDAYSTGSSIMPQKKNPDVAELIRGKTGRANGNLIALLTTMKGLPLAYNKDMQEDKEGVFDSVRTATSSLAILNAMMKEAKFNEQNMLAATKKGHLSATDLADYLVREKNVPFRTAHFITGKAVAHAENLGVDLSELDAAQLKSVDENLDENAVKFLNLHASKEARTSAGGTANASVRKQIEELESWLSKSGD.

The protein belongs to the lyase 1 family. Argininosuccinate lyase subfamily.

It localises to the cytoplasm. It carries out the reaction 2-(N(omega)-L-arginino)succinate = fumarate + L-arginine. It functions in the pathway amino-acid biosynthesis; L-arginine biosynthesis; L-arginine from L-ornithine and carbamoyl phosphate: step 3/3. This is Argininosuccinate lyase from Campylobacter curvus (strain 525.92).